The chain runs to 1203 residues: DNA-directed RNA polymerase subunit beta' (1203 aa).

4 residues coordinate Zn(2+): cysteine 60, cysteine 62, cysteine 75, and cysteine 78. The Mg(2+) site is built by aspartate 449, aspartate 451, and aspartate 453. Positions 818, 892, 899, and 902 each coordinate Zn(2+).

It belongs to the RNA polymerase beta' chain family. In terms of assembly, the RNAP catalytic core consists of 2 alpha, 1 beta, 1 beta' and 1 omega subunit. When a sigma factor is associated with the core the holoenzyme is formed, which can initiate transcription. It depends on Mg(2+) as a cofactor. Requires Zn(2+) as cofactor.

The enzyme catalyses RNA(n) + a ribonucleoside 5'-triphosphate = RNA(n+1) + diphosphate. Its function is as follows. DNA-dependent RNA polymerase catalyzes the transcription of DNA into RNA using the four ribonucleoside triphosphates as substrates. The protein is DNA-directed RNA polymerase subunit beta' of Bacillus mycoides (strain KBAB4) (Bacillus weihenstephanensis).